A 456-amino-acid polypeptide reads, in one-letter code: MGEIIKYKGFDHVWQYSGPWLYCLIGIYISLPVLAYHILPWIFHKNRSNKRKTISIFVLGDLGHSPRMCYHASSFSKLDYYVNLCGYVETEPSHQIVDDVNIDIIPIEAIKNTNNLPYIMFAILKVVRQCGKIWSILWDTRGSDYIMIQNPPSIPILLIVILFKTVFSRETKLIIDWHNLNYTILNLRYNNLNHPFVKLVKLYEKILGQFANLNITVTKSMKKYLVKEFGFQKSKIVTLYDRPGVQFQPLSNKREFMSEHKLFEDIDIEKYKVLISSTSFTPDEDFNILLDALKNYENTPNTPPILLIVTGKGPLKGKFLETVDKLEFTNKVCVKSAWLSSEDYPKVLACADLGISLHTSSSGIDLPMKIVDFFGCGVPVVSLDFPAIDELVKNKVNGLITNSKSDQTKEVARLVTEVFTDDALLRSIKEGALEESNSRWDENWMQTFSSIFENKS.

Residues 1–22 (MGEIIKYKGFDHVWQYSGPWLY) are Lumenal-facing. A helical transmembrane segment spans residues 23 to 43 (CLIGIYISLPVLAYHILPWIF). At 44–103 (HKNRSNKRKTISIFVLGDLGHSPRMCYHASSFSKLDYYVNLCGYVETEPSHQIVDDVNID) the chain is on the cytoplasmic side. The segment at residues 104-124 (IIPIEAIKNTNNLPYIMFAIL) is an intramembrane region (helical). Residues 125–456 (KVVRQCGKIW…TFSSIFENKS (332 aa)) are Cytoplasmic-facing.

Belongs to the glycosyltransferase group 1 family.

It localises to the endoplasmic reticulum membrane. The catalysed reaction is an N,N'-diacetylchitobiosyl-diphospho-di-trans,poly-cis-dolichol + GDP-alpha-D-mannose = a beta-D-Man-(1-&gt;4)-beta-D-GlcNAc-(1-&gt;4)-alpha-D-GlcNAc-diphospho-di-trans,poly-cis-dolichol + GDP + H(+). It participates in protein modification; protein glycosylation. Functionally, participates in the formation of the lipid-linked precursor oligosaccharide for N-glycosylation. Involved in assembling the dolichol-pyrophosphate-GlcNAc(2)-Man(5) intermediate on the cytoplasmic surface of the ER. The protein is Chitobiosyldiphosphodolichol beta-mannosyltransferase (ALG1) of Candida albicans (strain SC5314 / ATCC MYA-2876) (Yeast).